Consider the following 585-residue polypeptide: A-type ATP synthase subunit A (585 aa).

231–238 (GPFGSGKT) is a binding site for ATP.

This sequence belongs to the ATPase alpha/beta chains family. In terms of assembly, has multiple subunits with at least A(3), B(3), C, D, E, F, H, I and proteolipid K(x).

It is found in the cell membrane. It carries out the reaction ATP + H2O + 4 H(+)(in) = ADP + phosphate + 5 H(+)(out). Component of the A-type ATP synthase that produces ATP from ADP in the presence of a proton gradient across the membrane. The A chain is the catalytic subunit. The chain is A-type ATP synthase subunit A from Desulfurococcus sp. (strain SY).